The primary structure comprises 425 residues: Serine--tRNA ligase (425 aa).

230–232 (TAE) is an L-serine binding site. Residue 261 to 263 (RSE) coordinates ATP. Glutamate 284 contributes to the L-serine binding site. 348–351 (EISS) is a binding site for ATP. Serine 384 contributes to the L-serine binding site.

The protein belongs to the class-II aminoacyl-tRNA synthetase family. Type-1 seryl-tRNA synthetase subfamily. In terms of assembly, homodimer. The tRNA molecule binds across the dimer.

The protein localises to the cytoplasm. It carries out the reaction tRNA(Ser) + L-serine + ATP = L-seryl-tRNA(Ser) + AMP + diphosphate + H(+). The catalysed reaction is tRNA(Sec) + L-serine + ATP = L-seryl-tRNA(Sec) + AMP + diphosphate + H(+). It participates in aminoacyl-tRNA biosynthesis; selenocysteinyl-tRNA(Sec) biosynthesis; L-seryl-tRNA(Sec) from L-serine and tRNA(Sec): step 1/1. In terms of biological role, catalyzes the attachment of serine to tRNA(Ser). Is also able to aminoacylate tRNA(Sec) with serine, to form the misacylated tRNA L-seryl-tRNA(Sec), which will be further converted into selenocysteinyl-tRNA(Sec). This is Serine--tRNA ligase from Streptococcus pyogenes serotype M6 (strain ATCC BAA-946 / MGAS10394).